Reading from the N-terminus, the 297-residue chain is Mitochondrial glycine transporter (297 aa).

Solcar repeat units follow at residues T5–A81, L105–T189, and T211–H295. The next 6 helical transmembrane spans lie at L8–Q33, G56–L82, L111–E136, G164–K187, I215–M241, and G270–I288.

The protein belongs to the mitochondrial carrier (TC 2.A.29) family. SLC25A38 subfamily.

It is found in the mitochondrion inner membrane. It catalyses the reaction glycine(in) = glycine(out). In terms of biological role, mitochondrial glycine transporter that imports glycine into the mitochondrial matrix. Plays an important role in providing glycine for the first enzymatic step in heme biosynthesis, the condensation of glycine with succinyl-CoA to produce 5-aminolevulinate (ALA) in the mitochondrial matrix. The protein is Mitochondrial glycine transporter of Candida glabrata (strain ATCC 2001 / BCRC 20586 / JCM 3761 / NBRC 0622 / NRRL Y-65 / CBS 138) (Yeast).